The primary structure comprises 194 residues: Large ribosomal subunit protein eL15 (194 aa).

Residues 164 to 194 (AGRKARGLRRKGRGAEKVRPSLRANFRKKRR) form a disordered region. The segment covering 166–175 (RKARGLRRKG) has biased composition (basic residues).

It belongs to the eukaryotic ribosomal protein eL15 family.

The chain is Large ribosomal subunit protein eL15 (rpl15e) from Archaeoglobus fulgidus (strain ATCC 49558 / DSM 4304 / JCM 9628 / NBRC 100126 / VC-16).